A 70-amino-acid polypeptide reads, in one-letter code: uncharacterized protein (70 aa).

The helical transmembrane segment at 14 to 34 (CLVVWFACVYSLLILVVLLLI) threads the bilayer.

Its subcellular location is the virion membrane. This is an uncharacterized protein from Homo sapiens (Human).